Reading from the N-terminus, the 373-residue chain is Glutamate 5-kinase (373 aa).

Lysine 16 is a binding site for ATP. Positions 56, 143, and 155 each coordinate substrate. 175 to 176 contributes to the ATP binding site; sequence TD. The 79-residue stretch at 281 to 359 folds into the PUA domain; that stretch reads RGRLTLDDGA…SRIDSLLGYK (79 aa).

The protein belongs to the glutamate 5-kinase family.

It localises to the cytoplasm. The catalysed reaction is L-glutamate + ATP = L-glutamyl 5-phosphate + ADP. The protein operates within amino-acid biosynthesis; L-proline biosynthesis; L-glutamate 5-semialdehyde from L-glutamate: step 1/2. Functionally, catalyzes the transfer of a phosphate group to glutamate to form L-glutamate 5-phosphate. The polypeptide is Glutamate 5-kinase (Saccharophagus degradans (strain 2-40 / ATCC 43961 / DSM 17024)).